The primary structure comprises 126 residues: Histone H2B 3 (126 aa).

Low complexity predominate over residues 1–12 (MPEPAKSAPAPK). Residues 1 to 34 (MPEPAKSAPAPKKGSKKAVTKTQKKGDKKRRKTR) form a disordered region. Residues Lys-6 and Lys-13 each carry the N6-acetyllysine modification. A compositionally biased stretch (basic residues) spans 13 to 34 (KGSKKAVTKTQKKGDKKRRKTR). Ser-15 is subject to Phosphoserine. Residues Lys-16 and Lys-21 each carry the N6-acetyllysine modification. O-linked (GlcNAc) serine glycosylation occurs at Ser-113. Lys-121 participates in a covalent cross-link: Glycyl lysine isopeptide (Lys-Gly) (interchain with G-Cter in ubiquitin).

This sequence belongs to the histone H2B family. The nucleosome is a histone octamer containing two molecules each of H2A, H2B, H3 and H4 assembled in one H3-H4 heterotetramer and two H2A-H2B heterodimers. The octamer wraps approximately 147 bp of DNA. Post-translationally, monoubiquitination of Lys-121 by the BRE1 gives a specific tag for epigenetic transcriptional activation and is also prerequisite for histone H3 'Lys-4' and 'Lys-79' methylation. Phosphorylated on Ser-15 during apoptosis; which facilitates apoptotic chromatin condensation. In terms of processing, glcNAcylation at Ser-113 promotes monoubiquitination of Lys-121. It fluctuates in response to extracellular glucose, and associates with transcribed genes.

It localises to the nucleus. The protein localises to the chromosome. Functionally, core component of nucleosome. Nucleosomes wrap and compact DNA into chromatin, limiting DNA accessibility to the cellular machineries which require DNA as a template. Histones thereby play a central role in transcription regulation, DNA repair, DNA replication and chromosomal stability. DNA accessibility is regulated via a complex set of post-translational modifications of histones, also called histone code, and nucleosome remodeling. In Danio rerio (Zebrafish), this protein is Histone H2B 3 (hist2h2l).